The sequence spans 168 residues: Putative adenylate kinase (168 aa).

The ATP site is built by Gly-10, Gly-12, Lys-13, Thr-14, and Thr-15. Positions 28–51 are NMP; that stretch reads HLNERIREEGLDAGRDEERDSLVA. An LID region spans residues 97 to 107; sequence DRGEPAAKAAE. Arg-98 is an ATP binding site.

The protein belongs to the adenylate kinase family. AK6 subfamily. Interacts with uS11. Not a structural component of 40S pre-ribosomes, but transiently interacts with them by binding to uS11.

The catalysed reaction is AMP + ATP = 2 ADP. It carries out the reaction ATP + H2O = ADP + phosphate + H(+). Broad-specificity nucleoside monophosphate (NMP) kinase that catalyzes the reversible transfer of the terminal phosphate group between nucleoside triphosphates and monophosphates. Also has ATPase activity. Involved in the late maturation steps of the 30S ribosomal particles, specifically 16S rRNA maturation. While NMP activity is not required for ribosome maturation, ATPase activity is. Associates transiently with small ribosomal subunit protein uS11. ATP hydrolysis breaks the interaction with uS11. May temporarily remove uS11 from the ribosome to enable a conformational change of the ribosomal RNA that is needed for the final maturation step of the small ribosomal subunit. This Natronomonas pharaonis (strain ATCC 35678 / DSM 2160 / CIP 103997 / JCM 8858 / NBRC 14720 / NCIMB 2260 / Gabara) (Halobacterium pharaonis) protein is Putative adenylate kinase.